The chain runs to 248 residues: AA9 family lytic polysaccharide monooxygenase G (248 aa).

The N-terminal stretch at 1–21 is a signal peptide; sequence MLPNAAGLLVAGVVSLSGVAA. H22 contacts Cu(2+). Residue N58 is glycosylated (N-linked (GlcNAc...) asparagine). A disulfide bridge links C77 with C195. H107 is a Cu(2+) binding site. Q190 contacts O2. Cu(2+) is bound at residue Y192. N-linked (GlcNAc...) asparagine glycosylation occurs at N203.

Belongs to the polysaccharide monooxygenase AA9 family. It depends on Cu(2+) as a cofactor.

It is found in the secreted. It catalyses the reaction [(1-&gt;4)-beta-D-glucosyl]n+m + reduced acceptor + O2 = 4-dehydro-beta-D-glucosyl-[(1-&gt;4)-beta-D-glucosyl]n-1 + [(1-&gt;4)-beta-D-glucosyl]m + acceptor + H2O.. Functionally, lytic polysaccharide monooxygenase (LPMO) that depolymerizes crystalline and amorphous polysaccharides via the oxidation of scissile alpha- or beta-(1-4)-glycosidic bonds, yielding C1 or C4 oxidation products. Catalysis by LPMOs requires the reduction of the active-site copper from Cu(II) to Cu(I) by a reducing agent and H(2)O(2) or O(2) as a cosubstrate. The polypeptide is AA9 family lytic polysaccharide monooxygenase G (Malbranchea cinnamomea (Thermophilic fungus)).